Consider the following 303-residue polypeptide: N-acetyl-D-glucosamine kinase (303 aa).

ATP-binding positions include 4-11 (GFDIGGTK) and 133-140 (GVGGGLVF). The Zn(2+) site is built by histidine 157, cysteine 177, cysteine 179, and cysteine 184.

This sequence belongs to the ROK (NagC/XylR) family. NagK subfamily.

It catalyses the reaction N-acetyl-D-glucosamine + ATP = N-acetyl-D-glucosamine 6-phosphate + ADP + H(+). It participates in cell wall biogenesis; peptidoglycan recycling. Catalyzes the phosphorylation of N-acetyl-D-glucosamine (GlcNAc) derived from cell-wall degradation, yielding GlcNAc-6-P. The polypeptide is N-acetyl-D-glucosamine kinase (Shigella flexneri serotype 5b (strain 8401)).